The sequence spans 607 residues: Translation initiation factor IF-2 (607 aa).

The disordered stretch occupies residues Ser-54 to Ala-93. Low complexity predominate over residues Thr-62–Ala-93. Residues His-108–Lys-281 form the tr-type G domain. The G1 stretch occupies residues Gly-117 to Thr-124. Residue Gly-117–Thr-124 participates in GTP binding. The interval Gly-142 to His-146 is G2. The G3 stretch occupies residues Asp-163–Gly-166. GTP-binding positions include Asp-163–His-167 and Asn-217–Asp-220. Residues Asn-217–Asp-220 form a G4 region. The interval Ser-253 to Lys-255 is G5.

It belongs to the TRAFAC class translation factor GTPase superfamily. Classic translation factor GTPase family. IF-2 subfamily.

It localises to the cytoplasm. Its function is as follows. One of the essential components for the initiation of protein synthesis. Protects formylmethionyl-tRNA from spontaneous hydrolysis and promotes its binding to the 30S ribosomal subunits. Also involved in the hydrolysis of GTP during the formation of the 70S ribosomal complex. This Deinococcus deserti (strain DSM 17065 / CIP 109153 / LMG 22923 / VCD115) protein is Translation initiation factor IF-2.